The following is an 885-amino-acid chain: 3-hydroxy-3-methylglutaryl-coenzyme A reductase (885 aa).

Topologically, residues M1–H9 are cytoplasmic. The helical transmembrane segment at G10–G39 threads the bilayer. The Lumenal segment spans residues N40–D56. Residues V57–F78 form a helical membrane-spanning segment. One can recognise an SSD domain in the interval D61–L218. Residues Y75–F78 carry the INSIG-binding motif motif. Over Q79–K89 the chain is Cytoplasmic. K89 is covalently cross-linked (Glycyl lysine isopeptide (Lys-Gly) (interchain with G-Cter in ubiquitin)). A helical transmembrane segment spans residues Y90–L114. At D115–E123 the chain is on the lumenal side. A helical transmembrane segment spans residues A124–S149. Residues Q150–R159 are Cytoplasmic-facing. Residues G160–V187 traverse the membrane as a helical segment. The Lumenal portion of the chain corresponds to R188–E191. Residues I192–L220 form a helical membrane-spanning segment. Over E221–K248 the chain is Cytoplasmic. A Glycyl lysine isopeptide (Lys-Gly) (interchain with G-Cter in ubiquitin) cross-link involves residue K248. A helical membrane pass occupies residues P249–A275. The Lumenal segment spans residues D276–K314. N-linked (GlcNAc...) asparagine glycosylation is found at N281 and N296. A helical transmembrane segment spans residues M315–F339. Residues E340 to A885 are Cytoplasmic-facing. Catalysis depends on charge relay system residues E558, K688, and D764. Residue H863 is the Proton donor of the active site. Phosphoserine; by AMPK is present on S869.

It belongs to the HMG-CoA reductase family. Homotetramer. Homodimer. Interacts (via its SSD) with INSIG1; the interaction, accelerated by sterols, leads to the recruitment of HMGCR to AMFR/gp78 for its ubiquitination by the sterol-mediated ERAD pathway. Interacts with UBIAD1. Undergoes sterol-mediated ubiquitination and ER-associated degradation (ERAD). Accumulation of sterols in the endoplasmic reticulum (ER) membrane, triggers binding of the reductase to the ER membrane protein INSIG1 or INSIG2. The INSIG1 binding leads to the recruitment of the ubiquitin ligase, AMFR/gp78, RNF139 or RNF145, initiating ubiquitination of the reductase. The ubiquitinated reductase is then extracted from the ER membrane and delivered to cytosolic 26S proteosomes by a mechanism probably mediated by the ATPase Valosin-containing protein VCP/p97. The INSIG2-binding leads to the recruitment of the ubiquitin ligase RNF139, initiating ubiquitination of the reductase. Lys-248 is the main site of ubiquitination. Ubiquitination is enhanced by the presence of a geranylgeranylated protein. In terms of processing, N-glycosylated. Deglycosylated by NGLY1 on release from the endoplasmic reticulum (ER) in a sterol-mediated manner. Post-translationally, phosphorylated. Phosphorylation at Ser-869 reduces the catalytic activity. In terms of tissue distribution, high expression found in liver, heart, kidney, bladder and subcutaneous fat. Lower levels in lung, uterus and large intestine. Lowest levels in cerebrum, spleen, spinal cord, stomach, ovary, longissimus muscle, and small intestine.

The protein localises to the endoplasmic reticulum membrane. Its subcellular location is the peroxisome membrane. The enzyme catalyses (R)-mevalonate + 2 NADP(+) + CoA = (3S)-3-hydroxy-3-methylglutaryl-CoA + 2 NADPH + 2 H(+). Its pathway is metabolic intermediate biosynthesis; (R)-mevalonate biosynthesis; (R)-mevalonate from acetyl-CoA: step 3/3. Regulated by a negative feedback mechanism through sterols and non-sterol metabolites derived from mevalonate. Phosphorylation at Ser-869 down-regulates the catalytic activity. In terms of biological role, catalyzes the conversion of (3S)-hydroxy-3-methylglutaryl-CoA (HMG-CoA) to mevalonic acid, the rate-limiting step in the synthesis of cholesterol and other isoprenoids, thus plays a critical role in cellular cholesterol homeostasis. The polypeptide is 3-hydroxy-3-methylglutaryl-coenzyme A reductase (HMGCR) (Sus scrofa (Pig)).